A 571-amino-acid chain; its full sequence is MKRQRAIELDRVKKTMLNIDWDDALGDEEVPELEIIATDKIPPREPTLSGYEPAVSVRSLRDNELDDHLKRQRSLLTRLGDKLADKGEKIRNRIGELEYEKQRRMFQQRTKMQDADNGCQILEKPKSSDVFMRASTASKDTSGQGTSGSKDVSRSTFAAHFSDNLKMGPQPVKLVNDKLQDLGRGSWISKANRDSIIEKNNVWRSLPRLSKCKVSLKNFYSESKDPKGDRRPNEAYGKGKPNESSPYLLVDDDDGDDDKVIGYETPRHWSLKASPLQSSSCRKKSDDKVINLDEDEPLSPMVVEEACELPEGLPEDIYYPSSDQSDGRDLVQVSLKDLKCLSPGEYLTSPVINFYIRYVQHHVFSADKTAANCHFFNTFFYKKLTEAVSYKGNDRDAYFVKFRRWWKGFDLFCKSYIFIPIHEDLHWSLVIICIPDKEDESGLTIIHLDSLGLHPRNLIFNNVKRFLREEWNYLNQDAPLDLPISAKVWRDLPNMINEAEVQVPQQKNDFDCGLFLLFFIRRFIEEAPQRLTLQDLKMIHKKWFKPEEASALRIKIWNILVDLFRKGNQTD.

Positions 221–260 (SESKDPKGDRRPNEAYGKGKPNESSPYLLVDDDDGDDDKV) are disordered. Over residues 222-233 (ESKDPKGDRRPN) the composition is skewed to basic and acidic residues. Residues His-426, Asp-449, and Cys-512 contribute to the active site.

It belongs to the peptidase C48 family.

The protein resides in the nucleus. Its subcellular location is the nucleoplasm. Its function is as follows. Protease that catalyzes two essential functions in the SUMO pathway: processing of full-length SUMOs to their mature forms and deconjugation of SUMO from targeted proteins. Cleaves precursors of SUM1 and SUM2, but not of SUM3 or SUM5. Able to release SUM1 and SUM2 from conjugates, but unable to cleave SUM3. Protease activity mainly directed at deconjugating SUM1 and SUM2 from their target proteins. Regulates salt stress responses and flowering time. Redundant with ULP1D. The polypeptide is Ubiquitin-like-specific protease 1C (ULP1C) (Arabidopsis thaliana (Mouse-ear cress)).